The sequence spans 764 residues: uncharacterized protein (764 aa).

The Lumenal portion of the chain corresponds to 1–646; sequence MKEENGFAGF…LTKLYTFPFT (646 aa). The segment at 22 to 173 is disordered; that stretch reads LNDTAPTKSQ…SAITAPSRKV (152 aa). The N-linked (GlcNAc...) asparagine glycan is linked to Asn23. Polar residues-rich tracts occupy residues 25-41 and 61-82; these read TAPT…NNEG and SEAS…QSPS. At Ser80 the chain carries Phosphoserine. Residues 98-113 are compositionally biased toward acidic residues; it reads ENQENEADEAENEETS. A glycan (N-linked (GlcNAc...) asparagine) is linked at Asn118. A compositionally biased stretch (basic and acidic residues) spans 118–145; sequence NHTENTEEIAEESRPLERTHSGSNHHEA. Over residues 158–173 the composition is skewed to polar residues; that stretch reads NTLSQGSAITAPSRKV. In terms of domain architecture, GRAM spans 197–264; it reads RDFHRIFKVL…TEIVSVEKKS (68 aa). Residues Asn240 and Asn330 are each glycosylated (N-linked (GlcNAc...) asparagine). A disordered region spans residues 320 to 406; that stretch reads ASGNHHSGSS…DGNSVKKMNE (87 aa). Residues 321-330 are compositionally biased toward low complexity; it reads SGNHHSGSSN. Positions 331–340 are enriched in polar residues; the sequence is QSINADSSAG. A compositionally biased stretch (acidic residues) spans 352-371; sequence ANDESSEDDDEDNNTDEANE. 2 N-linked (GlcNAc...) asparagine glycosylation sites follow: Asn364 and Asn376. The segment covering 389–399 has biased composition (polar residues); sequence HSDNVVLSDGN. A VASt domain is found at 432-598; the sequence is LAHVLCSDVV…AFENYKVSPK (167 aa). N-linked (GlcNAc...) asparagine glycans are attached at residues Asn442 and Asn554. The segment covering 598–613 has biased composition (basic residues); that stretch reads KGRRKKITKHTKKKNK. Positions 598–626 are disordered; sequence KGRRKKITKHTKKKNKHASETSVAPEKVD. An N-linked (GlcNAc...) asparagine glycan is attached at Asn627. The chain crosses the membrane as a helical span at residues 647–667; sequence IITWLMHPTHLLLVVMFSMLV. The Cytoplasmic portion of the chain corresponds to 668–764; that stretch reads LQWWYMQQIL…LRKLEASGYI (97 aa).

It belongs to the YSP2 family.

Its subcellular location is the membrane. This is an uncharacterized protein from Schizosaccharomyces pombe (strain 972 / ATCC 24843) (Fission yeast).